The primary structure comprises 305 residues: MAAILPTFSIKSSSCTYSSSKRSLSSPKAVSLSSSVNGTPKVQSLRLSTSFVCSPNQIIKLKSVSPSRSTQLRRAVGGLEIKMMSVDAGIGVMGTKLGMMSFFEEDGTVVPVTVIGFKEGNIVTQVKTESTDGYNAVQVGYERLRDRKLTMPERGHLNKAGVIPMRHLQEFRLVSVDDFTPSQKLLFEELFKEGDMVDISGTTIGKGFQGGIKRHNFKRGLMTHGSKSHRALGSIGAGTTPGHVYKGKKMPGRMGGTKTKIRKLKIMKIDTDLRVVMIKGAVPGKPGNLLRLAPAKIVGKNIPKN.

A chloroplast-targeting transit peptide spans 1 to 84 (MAAILPTFSI…AVGGLEIKMM (84 aa)). Residues 228-256 (SHRALGSIGAGTTPGHVYKGKKMPGRMGG) form a disordered region.

Component of the chloroplast large ribosomal subunit (LSU). Mature 70S chloroplast ribosomes of higher plants consist of a small (30S) and a large (50S) subunit. The 30S small subunit contains 1 molecule of ribosomal RNA (16S rRNA) and 24 different proteins. The 50S large subunit contains 3 rRNA molecules (23S, 5S and 4.5S rRNA) and 33 different proteins.

The protein localises to the plastid. It localises to the chloroplast. Functionally, component of the chloroplast ribosome (chloro-ribosome), a dedicated translation machinery responsible for the synthesis of chloroplast genome-encoded proteins, including proteins of the transcription and translation machinery and components of the photosynthetic apparatus. In Spinacia oleracea (Spinach), this protein is Large ribosomal subunit protein uL3c (RPL3).